The sequence spans 411 residues: Methylthioribose-1-phosphate isomerase (411 aa).

Catalysis depends on D284, which acts as the Proton donor.

Belongs to the eIF-2B alpha/beta/delta subunits family. MtnA subfamily.

The protein localises to the cytoplasm. Its subcellular location is the nucleus. The catalysed reaction is 5-(methylsulfanyl)-alpha-D-ribose 1-phosphate = 5-(methylsulfanyl)-D-ribulose 1-phosphate. It participates in amino-acid biosynthesis; L-methionine biosynthesis via salvage pathway; L-methionine from S-methyl-5-thio-alpha-D-ribose 1-phosphate: step 1/6. Functionally, catalyzes the interconversion of methylthioribose-1-phosphate (MTR-1-P) into methylthioribulose-1-phosphate (MTRu-1-P). The chain is Methylthioribose-1-phosphate isomerase from Komagataella phaffii (strain GS115 / ATCC 20864) (Yeast).